The following is a 423-amino-acid chain: Lipase member M (423 aa).

A signal peptide spans M1–S33. An N-linked (GlcNAc...) asparagine glycan is attached at N48. One can recognise an AB hydrolase-1 domain in the interval P92–G392. S186 serves as the catalytic Nucleophile. A disulfide bridge links C260 with C269. Catalysis depends on charge relay system residues D357 and H386.

It belongs to the AB hydrolase superfamily. Lipase family. Exclusively expressed in the epidermis within the granular keratinocytes.

The protein localises to the secreted. In terms of biological role, plays a highly specific role in the last step of keratinocyte differentiation. May have an essential function in lipid metabolism of the most differentiated epidermal layers. This is Lipase member M (LIPM) from Homo sapiens (Human).